The sequence spans 93 residues: Small ribosomal subunit protein uS19 (93 aa).

It belongs to the universal ribosomal protein uS19 family.

Functionally, protein S19 forms a complex with S13 that binds strongly to the 16S ribosomal RNA. The sequence is that of Small ribosomal subunit protein uS19 from Tropheryma whipplei (strain TW08/27) (Whipple's bacillus).